A 140-amino-acid chain; its full sequence is Small ribosomal subunit protein uS12 (140 aa).

At aspartate 102 the chain carries 3-methylthioaspartic acid.

The protein belongs to the universal ribosomal protein uS12 family. Part of the 30S ribosomal subunit. Contacts proteins S8 and S17. May interact with IF1 in the 30S initiation complex.

Functionally, with S4 and S5 plays an important role in translational accuracy. In terms of biological role, interacts with and stabilizes bases of the 16S rRNA that are involved in tRNA selection in the A site and with the mRNA backbone. Located at the interface of the 30S and 50S subunits, it traverses the body of the 30S subunit contacting proteins on the other side and probably holding the rRNA structure together. The combined cluster of proteins S8, S12 and S17 appears to hold together the shoulder and platform of the 30S subunit. The sequence is that of Small ribosomal subunit protein uS12 from Bacillus anthracis (strain A0248).